A 75-amino-acid chain; its full sequence is Small ribosomal subunit protein bS18 (75 aa).

Belongs to the bacterial ribosomal protein bS18 family. Part of the 30S ribosomal subunit. Forms a tight heterodimer with protein bS6.

Binds as a heterodimer with protein bS6 to the central domain of the 16S rRNA, where it helps stabilize the platform of the 30S subunit. The protein is Small ribosomal subunit protein bS18 of Thermotoga sp. (strain RQ2).